The following is a 47-amino-acid chain: Protein DVU_0533 (47 aa).

The helical transmembrane segment at 18–37 (WTYILMGVTLLVYVGYWLFL) threads the bilayer.

The protein localises to the cell membrane. In terms of biological role, HMWC (high-molecular-weight cytochrome c), ORF2, ORF3, ORF4, ORF5 and ORF6 in the HMC operon form a transmembrane protein complex that allows electron flow from the periplasmic hydrogenase to the cytoplasmic enzymes that catalyze reduction of sulfates. The polypeptide is Protein DVU_0533 (Nitratidesulfovibrio vulgaris (strain ATCC 29579 / DSM 644 / CCUG 34227 / NCIMB 8303 / VKM B-1760 / Hildenborough) (Desulfovibrio vulgaris)).